Here is a 562-residue protein sequence, read N- to C-terminus: Valerena-4,7(11)-diene synthase (562 aa).

3 residues coordinate Mg(2+): Asp314, Asp318, and Glu467. A DDXXD motif motif is present at residues 314–318 (DDTYD).

This sequence belongs to the terpene synthase family. Requires Mg(2+) as cofactor. Predominantly expressed in root.

The catalysed reaction is (2E,6E)-farnesyl diphosphate = valerena-4,7(11)-diene + diphosphate. In terms of biological role, catalyzes formation of valerena-4,7(11)-diene, one of the active ingredients responsible for the sedative effect extracted from Valeriana officinalis root. The sequence is that of Valerena-4,7(11)-diene synthase (TPS2) from Valeriana officinalis (Valerian).